A 176-amino-acid chain; its full sequence is Protein GrpE (176 aa).

It belongs to the GrpE family. In terms of assembly, homodimer.

The protein resides in the cytoplasm. Functionally, participates actively in the response to hyperosmotic and heat shock by preventing the aggregation of stress-denatured proteins, in association with DnaK and GrpE. It is the nucleotide exchange factor for DnaK and may function as a thermosensor. Unfolded proteins bind initially to DnaJ; upon interaction with the DnaJ-bound protein, DnaK hydrolyzes its bound ATP, resulting in the formation of a stable complex. GrpE releases ADP from DnaK; ATP binding to DnaK triggers the release of the substrate protein, thus completing the reaction cycle. Several rounds of ATP-dependent interactions between DnaJ, DnaK and GrpE are required for fully efficient folding. The sequence is that of Protein GrpE from Meiothermus ruber.